An 834-amino-acid polypeptide reads, in one-letter code: Translation initiation factor IF-2 (834 aa).

Residues 1-247 (MTEEKKFSGS…STPATVRKEQ (247 aa)) form a disordered region. Over residues 45–101 (GGSRPSRPARPNNNNQNRPNNGGQSQNRNNQNRSNTSTGGQNRSNNGGNRNNRPGSR) the composition is skewed to low complexity. A compositionally biased stretch (basic and acidic residues) spans 109–125 (PMIREKKNWSTKPREGQ). Composition is skewed to low complexity over residues 149–165 (ASAA…ATKP) and 173–201 (ATKP…SARN). A compositionally biased stretch (basic residues) spans 224 to 233 (GSKKSRRIAA). The region spanning 335 to 504 (SRPPVVTIMG…LLQAEVLELK (170 aa)) is the tr-type G domain. Residues 344–351 (GHVDHGKT) are G1. 344–351 (GHVDHGKT) contacts GTP. Residues 369 to 373 (GITQH) form a G2 region. Positions 390–393 (DTPG) are G3. GTP-binding positions include 390–394 (DTPGH) and 444–447 (NKID). The segment at 444–447 (NKID) is G4. The interval 480–482 (SAK) is G5.

Belongs to the TRAFAC class translation factor GTPase superfamily. Classic translation factor GTPase family. IF-2 subfamily.

The protein resides in the cytoplasm. Functionally, one of the essential components for the initiation of protein synthesis. Protects formylmethionyl-tRNA from spontaneous hydrolysis and promotes its binding to the 30S ribosomal subunits. Also involved in the hydrolysis of GTP during the formation of the 70S ribosomal complex. The protein is Translation initiation factor IF-2 of Leuconostoc mesenteroides subsp. mesenteroides (strain ATCC 8293 / DSM 20343 / BCRC 11652 / CCM 1803 / JCM 6124 / NCDO 523 / NBRC 100496 / NCIMB 8023 / NCTC 12954 / NRRL B-1118 / 37Y).